A 1538-amino-acid polypeptide reads, in one-letter code: Dicer-like protein 1 (1538 aa).

The interval 39-72 is disordered; the sequence is DPAESSADVHKDEHSSDNSDNDNEAVPKPNDFSQ. Positions 45-55 are enriched in basic and acidic residues; the sequence is ADVHKDEHSSD. Residues 134-315 form the Helicase ATP-binding domain; the sequence is LFERAKTQNT…EAATRLETLL (182 aa). Position 147–154 (147–154) interacts with ATP; the sequence is LDTGSGKT. Residues 260–263 carry the DEAH box motif; the sequence is DEAH. In terms of domain architecture, Helicase C-terminal spans 460–619; the sequence is ELSKHFSDTT…ETLPEDRILH (160 aa). The 91-residue stretch at 652–742 folds into the Dicer dsRNA-binding fold domain; that stretch reads AIAILARYAS…NSIYHRRLPA (91 aa). The PAZ domain maps to 892–1020; sequence DTVSFVHNND…ICAEPLRISA (129 aa). RNase III domains are found at residues 1044–1203 and 1254–1406; these read IALE…LSGG and ARHV…VDSK. Residues glutamate 1295, aspartate 1392, and glutamate 1395 each coordinate Mg(2+). Positions 1440-1508 constitute a DRBM domain; sequence TFLHNKLTNE…SEKALAVLDG (69 aa). Residues cysteine 1452, histidine 1479, cysteine 1520, and cysteine 1522 each coordinate Zn(2+).

Belongs to the helicase family. Dicer subfamily. Requires Mg(2+) as cofactor. Mn(2+) is required as a cofactor.

Functionally, dicer-like endonuclease involved in cleaving double-stranded RNA in the RNA interference (RNAi) pathway. Produces 21 to 25 bp dsRNAs (siRNAs) which target the selective destruction of homologous RNAs leading to sequence-specific suppression of gene expression, called post-transcriptional gene silencing (PTGS). Part of a broad host defense response against viral infection and transposons. This Neosartorya fischeri (strain ATCC 1020 / DSM 3700 / CBS 544.65 / FGSC A1164 / JCM 1740 / NRRL 181 / WB 181) (Aspergillus fischerianus) protein is Dicer-like protein 1 (dcl1).